The sequence spans 173 residues: Photosystem I assembly protein Ycf3 (173 aa).

TPR repeat units lie at residues 35 to 68, 72 to 105, and 120 to 153; these read AYVY…EDNP, GETL…NSNQ, and GRIA…NPGG.

Belongs to the Ycf3 family.

It localises to the cellular thylakoid membrane. Functionally, essential for the assembly of the photosystem I (PSI) complex. May act as a chaperone-like factor to guide the assembly of the PSI subunits. This Parasynechococcus marenigrum (strain WH8102) protein is Photosystem I assembly protein Ycf3.